The primary structure comprises 606 residues: Aspartate--tRNA(Asp/Asn) ligase (606 aa).

E187 is a binding site for L-aspartate. Positions 211–214 (QQFK) are aspartate. L-aspartate is bound by residues R233 and H461. 233–235 (RDE) contributes to the ATP binding site. Residue E495 coordinates ATP. R502 lines the L-aspartate pocket. An ATP-binding site is contributed by 547 to 550 (GLDR).

It belongs to the class-II aminoacyl-tRNA synthetase family. Type 1 subfamily. Homodimer.

It is found in the cytoplasm. The catalysed reaction is tRNA(Asx) + L-aspartate + ATP = L-aspartyl-tRNA(Asx) + AMP + diphosphate. Aspartyl-tRNA synthetase with relaxed tRNA specificity since it is able to aspartylate not only its cognate tRNA(Asp) but also tRNA(Asn). Reaction proceeds in two steps: L-aspartate is first activated by ATP to form Asp-AMP and then transferred to the acceptor end of tRNA(Asp/Asn). The protein is Aspartate--tRNA(Asp/Asn) ligase of Chlorobium phaeobacteroides (strain DSM 266 / SMG 266 / 2430).